The chain runs to 73 residues: Large ribosomal subunit protein bL31 (73 aa).

Zn(2+)-binding residues include Cys16, Cys18, Cys37, and Cys40.

Belongs to the bacterial ribosomal protein bL31 family. Type A subfamily. As to quaternary structure, part of the 50S ribosomal subunit. Zn(2+) serves as cofactor.

Binds the 23S rRNA. The polypeptide is Large ribosomal subunit protein bL31 (Pseudomonas savastanoi pv. phaseolicola (strain 1448A / Race 6) (Pseudomonas syringae pv. phaseolicola (strain 1448A / Race 6))).